Consider the following 146-residue polypeptide: Ribonuclease H (146 aa).

The RNase H type-1 domain maps to 4–145 (ELNKVVVYTD…ADMLARSQIV (142 aa)). Mg(2+)-binding residues include Asp-13, Glu-51, Asp-73, and Asp-137.

This sequence belongs to the RNase H family. In terms of assembly, monomer. Mg(2+) is required as a cofactor.

It localises to the cytoplasm. The enzyme catalyses Endonucleolytic cleavage to 5'-phosphomonoester.. Its function is as follows. Endonuclease that specifically degrades the RNA of RNA-DNA hybrids. The chain is Ribonuclease H from Ehrlichia ruminantium (strain Gardel).